The following is a 322-amino-acid chain: Beta-ketoacyl-[acyl-carrier-protein] synthase III (322 aa).

Active-site residues include C112 and H249. The tract at residues 250–254 (QANQR) is ACP-binding. The active site involves N279.

The protein belongs to the thiolase-like superfamily. FabH family. As to quaternary structure, homodimer.

Its subcellular location is the cytoplasm. The catalysed reaction is malonyl-[ACP] + acetyl-CoA + H(+) = 3-oxobutanoyl-[ACP] + CO2 + CoA. The protein operates within lipid metabolism; fatty acid biosynthesis. In terms of biological role, catalyzes the condensation reaction of fatty acid synthesis by the addition to an acyl acceptor of two carbons from malonyl-ACP. Catalyzes the first condensation reaction which initiates fatty acid synthesis and may therefore play a role in governing the total rate of fatty acid production. Possesses both acetoacetyl-ACP synthase and acetyl transacylase activities. Its substrate specificity determines the biosynthesis of branched-chain and/or straight-chain of fatty acids. The sequence is that of Beta-ketoacyl-[acyl-carrier-protein] synthase III from Caulobacter vibrioides (strain ATCC 19089 / CIP 103742 / CB 15) (Caulobacter crescentus).